A 450-amino-acid chain; its full sequence is MGAPPGYRPSAWVHLLHQLPRADFQLRPVPSVFAPQEQEYQQALLLVAALAGLGLGLSLIFIAVYLIRFCCCRPPEPPGSKIPSPGGGCVTWSCIVALLAGCTGIGIGFYGNSETSDGVSQLSSALLHANHTLSTIDHLVLETVERLGEAVRTELTTLEEVLEPRTELVAAARGARRQAEAAAQQLQGLAFWQGVPLSPLQVAENVSFVEEYRWLAYVLLLLLELLVCLFTLLGLAKQSKWLVIVMTVMSLLVLVLSWGSMGLEAATAVGLSDFCSNPDPYVLNLTQEETGLSSDILSYYLLCNRAVSNPFQQRLTLSQRALANIHSQLLGLEREAVPQFPSAQKPLLSLEETLNVTEGNFHQLVALLHCRSLHKDYGAALRGLCEDALEGLLFLLLFSLLSAGALATALCSLPRAWALFPPSDDYDDTDDDDPFNPQESKRFVQWQSSI.

Residues 1–43 are Extracellular-facing; the sequence is MGAPPGYRPSAWVHLLHQLPRADFQLRPVPSVFAPQEQEYQQA. A helical transmembrane segment spans residues 44–64; that stretch reads LLLVAALAGLGLGLSLIFIAV. The Cytoplasmic portion of the chain corresponds to 65 to 88; sequence YLIRFCCCRPPEPPGSKIPSPGGG. Residues 89 to 109 form a helical membrane-spanning segment; it reads CVTWSCIVALLAGCTGIGIGF. The Extracellular portion of the chain corresponds to 110–214; sequence YGNSETSDGV…NVSFVEEYRW (105 aa). N-linked (GlcNAc...) asparagine glycans are attached at residues Asn-130 and Asn-205. The chain crosses the membrane as a helical span at residues 215–235; it reads LAYVLLLLLELLVCLFTLLGL. At 236–240 the chain is on the cytoplasmic side; sequence AKQSK. A helical transmembrane segment spans residues 241 to 261; it reads WLVIVMTVMSLLVLVLSWGSM. Topologically, residues 262–390 are extracellular; the sequence is GLEAATAVGL…LRGLCEDALE (129 aa). 2 cysteine pairs are disulfide-bonded: Cys-275/Cys-385 and Cys-303/Cys-370. N-linked (GlcNAc...) asparagine glycans are attached at residues Asn-284 and Asn-355. A helical membrane pass occupies residues 391–411; that stretch reads GLLFLLLFSLLSAGALATALC. Over 412–450 the chain is Cytoplasmic; sequence SLPRAWALFPPSDDYDDTDDDDPFNPQESKRFVQWQSSI. Positions 428–450 are disordered; the sequence is DTDDDDPFNPQESKRFVQWQSSI. The residue at position 440 (Ser-440) is a Phosphoserine.

It belongs to the tweety family. As to quaternary structure, homotetramer; disulfide-linked. Homodimer. Post-translationally, N-glycosylated. Contains high-mannose, hybrid and complex oligosaccharides. Expressed in brain, eye, ovary and testis, and at lower levels in muscle, placenta, liver and lung.

It localises to the cell membrane. It catalyses the reaction chloride(in) = chloride(out). It carries out the reaction L-glutamate(out) = L-glutamate(in). In terms of biological role, calcium-independent, swelling-dependent volume-regulated anion channel (VRAC-swell) which plays a pivotal role in the process of regulatory volume decrease (RVD) in the brain through the efflux of anions like chloride and organic osmolytes like glutamate. Functionally, ca(2+)-independent, swelling-activated chloride channel, possibly involved in regulation of cell volume. The polypeptide is Protein tweety homolog 1 (TTYH1) (Homo sapiens (Human)).